The chain runs to 40 residues: Sapecin-C (40 aa).

Disulfide bonds link cysteine 3-cysteine 30, cysteine 16-cysteine 36, and cysteine 20-cysteine 38.

The protein belongs to the invertebrate defensin family. Type 1 subfamily. As to expression, hemocytes and fat body.

Its subcellular location is the secreted. Sapecins, which are potent bactericidal proteins, are produced in response to injury. Sapecin C is cytotoxic to Gram-positive bacteria. This is Sapecin-C from Sarcophaga peregrina (Flesh fly).